A 1068-amino-acid polypeptide reads, in one-letter code: Leucine zipper protein 1 (1068 aa).

Position 2 is an N-acetylalanine (alanine 2). A coiled-coil region spans residues 11 to 354; it reads ASNRHLRFKL…KLQVRKQKEL (344 aa). Disordered regions lie at residues 251 to 292, 375 to 402, and 432 to 558; these read LSSK…VKDL, TKLK…KRER, and AAKA…QAVE. Positions 254–292 are enriched in basic and acidic residues; it reads KESKRKGSLDYLKQVENETRDKSENEKNRNQEDNKVKDL. A phosphoserine mark is found at serine 256, serine 261, serine 395, serine 513, serine 571, serine 575, serine 612, and serine 660. The segment covering 510–519 has biased composition (polar residues); sequence RTFSDSTHVS. Positions 677 to 700 are disordered; the sequence is TTITPEPEPKPQPNSREKVKSRGG. Threonine 680 bears the Phosphothreonine mark. A phosphoserine mark is found at serine 691 and serine 746. Positions 782–829 are disordered; sequence QKSTSKSVTSKVTSSITIYPSDSSGPRAVPSEAPRERHTSTSNIQVGP. Positions 785–796 are enriched in low complexity; sequence TSKSVTSKVTSS. A required for interaction with FLNA region spans residues 834 to 884; that stretch reads AISNHVSSPLELSIHKHDITLQLTEAERVGDGSPKNRAEMVVSRSSILIKP. Phosphoserine is present on serine 906. Residues 924 to 945 are disordered; sequence RDLKCSEDPPTGIGRNMEATNA. Threonine 952 bears the Phosphothreonine mark. 2 disordered regions span residues 959–995 and 1033–1068; these read QPRS…ASEV and NPLE…AEED. A compositionally biased stretch (polar residues) spans 984 to 994; it reads RRTQSSLTASE. Serine 988 carries the phosphoserine modification.

As to quaternary structure, component of the CERF-1 ISWI chromatin remodeling complex (also called the CECR2-containing remodeling factor (CERF) complex) at least composed of CECR2 and SMARCA1. Component of the CERF-5 ISWI chromatin remodeling complex at least composed of CECR2 and SMARCA5/SNF2H. LUZP1 is detected as part of the CERF-1 and CERF-5 complexes in embryonic stem (ES) cells where it is involved in complex stabilization but is not detected in the complexes in the testis. Interacts (via C-terminus) with LIMA1/EPLIN; both proteins restrict ciliation and may work together to regulate this process. Interacts with myosin light chain MYL9; the interaction results in inhibition of phosphorylation of MYL9 by DAPK3. Interacts with DAPK3; the interaction is likely to occur throughout the cell cycle and reduces the LUZP1-mediated suppression of MYL9 phosphorylation. Interacts with the chromosomal passenger complex (CPC); CPC kinase activity is required for localization of LUZP1 to the centromere. In terms of tissue distribution, predominantly expressed in the brain (at protein level).

It is found in the cytoplasm. The protein resides in the cytoskeleton. The protein localises to the microtubule organizing center. Its subcellular location is the centrosome. It localises to the cilium basal body. It is found in the midbody. The protein resides in the chromosome. The protein localises to the centromere. Its subcellular location is the spindle. It localises to the stress fiber. It is found in the nucleus. The protein resides in the cell projection. The protein localises to the dendrite. Its subcellular location is the perikaryon. It localises to the cell junction. It is found in the tight junction. In terms of biological role, F-actin cross-linking protein. Stabilizes actin and acts as a negative regulator of primary cilium formation. Positively regulates the phosphorylation of both myosin II and protein phosphatase 1 regulatory subunit PPP1R12A/MYPT1 and promotes the assembly of myosin II stacks within actin stress fibers. Inhibits the phosphorylation of myosin light chain MYL9 by DAPK3 and suppresses the constriction velocity of the contractile ring during cytokinesis. Binds to microtubules and promotes epithelial cell apical constriction by up-regulating levels of diphosphorylated myosin light chain (MLC) through microtubule-dependent inhibition of MLC dephosphorylation by myosin phosphatase. Involved in regulation of cell migration, nuclear size and centriole number, probably through regulation of the actin cytoskeleton. Component of the CERF-1 and CERF-5 chromatin remodeling complexes in embryonic stem cells where it acts to stabilize the complexes. Plays a role in embryonic brain and cardiovascular development. The chain is Leucine zipper protein 1 (Luzp1) from Mus musculus (Mouse).